A 131-amino-acid chain; its full sequence is Small ribosomal subunit protein uS8 (131 aa).

This sequence belongs to the universal ribosomal protein uS8 family. In terms of assembly, part of the 30S ribosomal subunit. Contacts proteins S5 and S12.

Its function is as follows. One of the primary rRNA binding proteins, it binds directly to 16S rRNA central domain where it helps coordinate assembly of the platform of the 30S subunit. This Helicobacter acinonychis (strain Sheeba) protein is Small ribosomal subunit protein uS8.